Reading from the N-terminus, the 677-residue chain is Mitochondrial 15S rRNA processing factor ppr3 (677 aa).

The N-terminal 43 residues, 1–43 (MFTEICGKLRTCIYKKVAFSRPLGCNLRQLPVFRDFHNSVSCL), are a transit peptide targeting the mitochondrion. PPR repeat units follow at residues 210–244 (SVYL…QLKP), 245–279 (DNYT…KIEA), 280–314 (NTHV…SLQS), 317–351 (DDKT…PINP), 355–390 (SSRT…QWKP), and 569–604 (DIHV…SYLP).

It belongs to the CCM1 family. Binds to mitochondrial small subunit 15S rRNA.

It localises to the mitochondrion. Regulates mitochondrial small subunit maturation by controlling 15S rRNA 5'-end processing. Localizes to the 5' precursor of the 15S rRNA in a position that is subsequently occupied by mS47 in the mature yeast mtSSU. Uses structure and sequence-specific RNA recognition, binding to a single-stranded region of the precursor and specifically recognizing bases -6 to -1. The exchange of Ccm1 for mS47 is coupled to the irreversible removal of precursor rRNA that is accompanied by conformational changes of the mitoribosomal proteins uS5m and mS26. These conformational changes signal completion of 5'-end rRNA processing through protection of the mature 5'-end of the 15S rRNA and stabilization of mS47. The removal of the 5' precursor together with the dissociation of Ccm1 may be catalyzed by the 5'-3' exoribonuclease Pet127. Involved in the specific removal of group I introns in mitochondrial encoded transcripts. The sequence is that of Mitochondrial 15S rRNA processing factor ppr3 (dmr1) from Schizosaccharomyces japonicus (strain yFS275 / FY16936) (Fission yeast).